A 315-amino-acid polypeptide reads, in one-letter code: Replication factor C small subunit (315 aa).

Position 43–50 (43–50) interacts with ATP; the sequence is GSPGVGKT.

Belongs to the activator 1 small subunits family. RfcS subfamily. Heteromultimer composed of small subunits (RfcS) and large subunits (RfcL).

Functionally, part of the RFC clamp loader complex which loads the PCNA sliding clamp onto DNA. This chain is Replication factor C small subunit, found in Methanococcus maripaludis (strain C5 / ATCC BAA-1333).